The following is a 178-amino-acid chain: Interleukin-10 (178 aa).

A signal peptide spans Met-1–Ile-18. An N-linked (GlcNAc...) asparagine glycan is attached at Asn-29. 2 disulfide bridges follow: Cys-30–Cys-126 and Cys-80–Cys-132. N-linked (GlcNAc...) asparagine glycosylation is present at Asn-134.

It belongs to the IL-10 family. Homodimer. Interacts with IL10RA and IL10RB.

It localises to the secreted. Major immune regulatory cytokine that acts on many cells of the immune system where it has profound anti-inflammatory functions, limiting excessive tissue disruption caused by inflammation. Mechanistically, IL10 binds to its heterotetrameric receptor comprising IL10RA and IL10RB leading to JAK1 and STAT2-mediated phosphorylation of STAT3. In turn, STAT3 translocates to the nucleus where it drives expression of anti-inflammatory mediators. Targets antigen-presenting cells (APCs) such as macrophages and monocytes and inhibits their release of pro-inflammatory cytokines including granulocyte-macrophage colony-stimulating factor /GM-CSF, granulocyte colony-stimulating factor/G-CSF, IL-1 alpha, IL-1 beta, IL-6, IL-8 and TNF-alpha. Also interferes with antigen presentation by reducing the expression of MHC-class II and co-stimulatory molecules, thereby inhibiting their ability to induce T cell activation. In addition, controls the inflammatory response of macrophages by reprogramming essential metabolic pathways including mTOR signaling. This is Interleukin-10 (Il10) from Mus musculus (Mouse).